A 415-amino-acid chain; its full sequence is S-inosyl-L-homocysteine hydrolase (415 aa).

Asp-123 and Glu-148 together coordinate substrate. 149–151 (TTT) is a binding site for NAD(+). Residues Lys-178 and Asp-182 each coordinate substrate. NAD(+) is bound by residues Asn-183, 212–217 (GYGWCG), Glu-235, 291–293 (AGH), and Asn-337.

It belongs to the adenosylhomocysteinase family. In terms of assembly, exists both as a homotetramer and a homodimer, in a 4:1 ratio. NAD(+) is required as a cofactor.

The protein localises to the cytoplasm. It carries out the reaction S-inosyl-L-homocysteine + H2O = L-homocysteine + inosine. It functions in the pathway amino-acid biosynthesis; S-adenosyl-L-methionine biosynthesis. Catalyzes the hydrolysis of S-inosyl-L-homocysteine (SIH) to L-homocysteine (Hcy) and inosine. Likely functions in a S-adenosyl-L-methionine (SAM) recycling pathway from S-adenosyl-L-homocysteine (SAH) produced from SAM-dependent methylation reactions. Can also catalyze the reverse reaction in vitro, i.e. the synthesis of SIH from Hcy and inosine. Is specific for SIH and inosine as it is unable to either hydrolyze SAH or synthesize SAH from adenosine and Hcy. The protein is S-inosyl-L-homocysteine hydrolase of Methanocaldococcus jannaschii (strain ATCC 43067 / DSM 2661 / JAL-1 / JCM 10045 / NBRC 100440) (Methanococcus jannaschii).